Consider the following 622-residue polypeptide: MVTPGNIGSFTVWDYLVFALMLLISAVIGIYYAFAGGGQKTSKDFLMGGRSMTAVPVALSLTASFMSAVTVLGTPAEVYRFGAMFIIFAFSYTIVVIISSEVFLPVFYRLGITSTYEYLELRFNKFVRLLGTILFIIQTVLYTGIVIYAPALALNQVTGFDLWGAVVATGVVCTFYCTMGGLKAVVWTDVFQVGIMVAGFTSVIIRAVVVQGGIGPILNDSYYGDRLNFWDFDPNPLKRHTFWTIVVGGTFTWTGIYGVNQAQVQRYIACKTRFQAKMSLYVNLIGLWAILACAVLSGLAMYSIYKDCDPWTAKFVSAPDQLMPYLALDILRDYPGLPGLFVSCAYSGTLSTVSSSINALAAVTVEDLIKPYIRSLSEKKMSWISKGTSLLYGAICIGMAGIASLMGGLLQAALSIFGMVGGPLLGLFSLGILFPFVNSLGAVIGLLSGFAISLWVGIGSQIYAPSPSSSLPKPLSLEGCNFTSIESNWTSTVMPMMTTLIPETQVSSRPELADSWYSLSYLYFSTIGTIVAVLVGVIVSLLSGGLKQNVNREFLLTSEDFSYLNVLFSPCKEKGQEEKVEVLNWKARRTDNDMEQGTDNPAFNNMEMTSTEKGEKTNGITA.

Topologically, residues 1–15 (MVTPGNIGSFTVWDY) are extracellular. The helical transmembrane segment at 16–36 (LVFALMLLISAVIGIYYAFAG) threads the bilayer. Residues 37–51 (GGQKTSKDFLMGGRS) are Cytoplasmic-facing. A helical membrane pass occupies residues 52-72 (MTAVPVALSLTASFMSAVTVL). Residues 73–83 (GTPAEVYRFGA) are Extracellular-facing. A helical membrane pass occupies residues 84-104 (MFIIFAFSYTIVVIISSEVFL). Over 105–128 (PVFYRLGITSTYEYLELRFNKFVR) the chain is Cytoplasmic. A helical transmembrane segment spans residues 129 to 149 (LLGTILFIIQTVLYTGIVIYA). Residues 150–161 (PALALNQVTGFD) lie on the Extracellular side of the membrane. Residues 162–182 (LWGAVVATGVVCTFYCTMGGL) traverse the membrane as a helical segment. Residues 183-184 (KA) are Cytoplasmic-facing. A helical membrane pass occupies residues 185 to 205 (VVWTDVFQVGIMVAGFTSVII). At 206–241 (RAVVVQGGIGPILNDSYYGDRLNFWDFDPNPLKRHT) the chain is on the extracellular side. N-linked (GlcNAc...) asparagine glycosylation occurs at Asn219. Residues 242 to 262 (FWTIVVGGTFTWTGIYGVNQA) form a helical membrane-spanning segment. Topologically, residues 263 to 283 (QVQRYIACKTRFQAKMSLYVN) are cytoplasmic. A helical transmembrane segment spans residues 284–304 (LIGLWAILACAVLSGLAMYSI). At 305–336 (YKDCDPWTAKFVSAPDQLMPYLALDILRDYPG) the chain is on the extracellular side. The chain crosses the membrane as a helical span at residues 337 to 357 (LPGLFVSCAYSGTLSTVSSSI). At 358–389 (NALAAVTVEDLIKPYIRSLSEKKMSWISKGTS) the chain is on the cytoplasmic side. Residues 390-410 (LLYGAICIGMAGIASLMGGLL) traverse the membrane as a helical segment. Residues 411–415 (QAALS) are Extracellular-facing. A helical transmembrane segment spans residues 416-436 (IFGMVGGPLLGLFSLGILFPF). At 437–438 (VN) the chain is on the cytoplasmic side. The helical transmembrane segment at 439–459 (SLGAVIGLLSGFAISLWVGIG) threads the bilayer. Residues 460–521 (SQIYAPSPSS…LADSWYSLSY (62 aa)) lie on the Extracellular side of the membrane. Residues Asn481 and Asn488 are each glycosylated (N-linked (GlcNAc...) asparagine). Residues 522–542 (LYFSTIGTIVAVLVGVIVSLL) form a helical membrane-spanning segment. The Cytoplasmic segment spans residues 543 to 622 (SGGLKQNVNR…KGEKTNGITA (80 aa)). Positions 591 to 622 (DNDMEQGTDNPAFNNMEMTSTEKGEKTNGITA) are disordered. Polar residues predominate over residues 595-609 (EQGTDNPAFNNMEMT).

Belongs to the sodium:solute symporter (SSF) (TC 2.A.21) family. As to expression, in the gastrula and neurula stages, expressed in the gastrula anterior endoderm and in the entire circumference of the blastopore lip superficial endoderm. At tailbud stages, abundant expression observed in the ventral midgut region. As development proceeds expression becomes restricted to the liver diverticulum and ultimately to the presumptive gallbladder, by tadpole stage 35. Also present in pronephros and the tip of the tail.

The protein resides in the apical cell membrane. The enzyme catalyses (S)-lactate(out) + 2 Na(+)(out) = (S)-lactate(in) + 2 Na(+)(in). The catalysed reaction is propanoate(out) + 2 Na(+)(out) = propanoate(in) + 2 Na(+)(in). It carries out the reaction pyruvate(out) + 2 Na(+)(out) = pyruvate(in) + 2 Na(+)(in). It catalyses the reaction acetate(out) + 2 Na(+)(out) = acetate(in) + 2 Na(+)(in). The enzyme catalyses butanoate(out) + 2 Na(+)(out) = butanoate(in) + 2 Na(+)(in). The catalysed reaction is nicotinate(out) + 2 Na(+)(out) = nicotinate(in) + 2 Na(+)(in). It carries out the reaction (R)-3-hydroxybutanoate(out) + 2 Na(+)(out) = (R)-3-hydroxybutanoate(in) + 2 Na(+)(in). It catalyses the reaction acetoacetate(out) + 2 Na(+)(out) = acetoacetate(in) + 2 Na(+)(in). The enzyme catalyses 4-methyl-2-oxopentanoate(out) + 2 Na(+)(out) = 4-methyl-2-oxopentanoate(in) + 2 Na(+)(in). The catalysed reaction is 5-oxo-L-proline(out) + 2 Na(+)(out) = 5-oxo-L-proline(in) + 2 Na(+)(in). It carries out the reaction iodide(out) = iodide(in). It catalyses the reaction chloride(in) = chloride(out). The enzyme catalyses nitrate(in) = nitrate(out). The catalysed reaction is bromide(in) = bromide(out). Its function is as follows. Acts as an electrogenic sodium (Na(+)) and chloride (Cl-)-dependent sodium-coupled solute transporter, including transport of monocarboxylates (short-chain fatty acids including L-lactate, D-lactate, pyruvate, acetate, propionate, valerate and butyrate), mocarboxylate drugs (nicotinate, benzoate, salicylate and 5-aminosalicylate) and ketone bodies (beta-D-hydroxybutyrate, acetoacetate and alpha-ketoisocaproate), with a Na(+):substrate stoichiometry of between 4:1 and 2:1. Catalyzes passive carrier mediated diffusion of iodide. Mediates iodide transport from the thyrocyte into the colloid lumen through the apical membrane. Mediates sodium-coupled electrogenic transport of pyroglutamate (5-oxo-L-proline). Can mediate the transport of chloride, bromide, iodide and nitrate ions when external concentration of sodium ions is reduced. The polypeptide is Sodium-coupled monocarboxylate transporter 1 (Xenopus laevis (African clawed frog)).